Reading from the N-terminus, the 227-residue chain is Large ribosomal subunit protein bL25 (227 aa).

A disordered region spans residues methionine 1–serine 22.

Belongs to the bacterial ribosomal protein bL25 family. CTC subfamily. In terms of assembly, part of the 50S ribosomal subunit; part of the 5S rRNA/L5/L18/L25 subcomplex. Contacts the 5S rRNA. Binds to the 5S rRNA independently of L5 and L18.

Functionally, this is one of the proteins that binds to the 5S RNA in the ribosome where it forms part of the central protuberance. This Methylocella silvestris (strain DSM 15510 / CIP 108128 / LMG 27833 / NCIMB 13906 / BL2) protein is Large ribosomal subunit protein bL25.